The following is an 83-amino-acid chain: Exodeoxyribonuclease 7 small subunit (83 aa).

It belongs to the XseB family. As to quaternary structure, heterooligomer composed of large and small subunits.

It is found in the cytoplasm. The enzyme catalyses Exonucleolytic cleavage in either 5'- to 3'- or 3'- to 5'-direction to yield nucleoside 5'-phosphates.. Functionally, bidirectionally degrades single-stranded DNA into large acid-insoluble oligonucleotides, which are then degraded further into small acid-soluble oligonucleotides. The chain is Exodeoxyribonuclease 7 small subunit from Brucella melitensis biotype 1 (strain ATCC 23456 / CCUG 17765 / NCTC 10094 / 16M).